Reading from the N-terminus, the 96-residue chain is Keratin-associated protein 12-1 (96 aa).

14 consecutive repeat copies span residues 10–14 (CQPAC), 15–19 (CAPSP), 24–28 (CYIPV), 30–34 (CQSSV), 35–39 (CVPVS), 45–49 (CVPVR), 50–54 (CQSSV), 55–59 (CVPVS), 60–64 (CRPVV), 70–74 (CQSSG), 75–79 (CCQPS), 80–84 (CTSVL), 85–89 (CRPIS), and 90–94 (CSTPS). The segment at 10–94 (CQPACCAPSP…CRPISCSTPS (85 aa)) is 14 X 5 AA approximate repeats.

This sequence belongs to the KRTAP type 12 family. Interacts with hair keratins. Restricted to a narrow region of the hair fiber cuticle, lying approximately 20 cell layers above the apex of the dermal papilla of the hair root; not detected in any other tissues.

Its function is as follows. In the hair cortex, hair keratin intermediate filaments are embedded in an interfilamentous matrix, consisting of hair keratin-associated proteins (KRTAP), which are essential for the formation of a rigid and resistant hair shaft through their extensive disulfide bond cross-linking with abundant cysteine residues of hair keratins. The matrix proteins include the high-sulfur and high-glycine-tyrosine keratins. This is Keratin-associated protein 12-1 (KRTAP12-1) from Homo sapiens (Human).